The chain runs to 449 residues: uncharacterized protein (449 aa).

Residues 1–13 (MPKAPKTKLHHAP) show a composition bias toward basic residues. The tract at residues 1-125 (MPKAPKTKLH…SQEEEEYEEL (125 aa)) is disordered. S22 carries the phosphoserine modification. Polar residues predominate over residues 73–84 (KPSQISAFISNG). S156 bears the Phosphoserine mark.

Belongs to the bystin family.

This is an uncharacterized protein from Schizosaccharomyces pombe (strain 972 / ATCC 24843) (Fission yeast).